Consider the following 121-residue polypeptide: Flagellar protein FliT (121 aa).

The segment at 1 to 50 is required for homodimerization; that stretch reads MNHAPHLYFAWQQLVEKSQLMLRLATEEQWDELIASEMAYVNAVQEIAHL. Residues 60–98 are fliD binding; it reads MQEQLRPMLRLILDNESKVKQLLQIRMDELAKLVGQSSV.

It belongs to the FliT family. In terms of assembly, homodimer. Interacts with FliD and FlhC.

The protein resides in the cytoplasm. It is found in the cytosol. Dual-function protein that regulates the transcription of class 2 flagellar operons and that also acts as an export chaperone for the filament-capping protein FliD. As a transcriptional regulator, acts as an anti-FlhDC factor; it directly binds FlhC, thus inhibiting the binding of the FlhC/FlhD complex to class 2 promoters, resulting in decreased expression of class 2 flagellar operons. As a chaperone, effects FliD transition to the membrane by preventing its premature polymerization, and by directing it to the export apparatus. This is Flagellar protein FliT from Escherichia coli O8 (strain IAI1).